The chain runs to 135 residues: Protein PsiE homolog (135 aa).

Helical transmembrane passes span 13-33 (VLQW…VIFL), 54-74 (YMLV…ALIV), 82-102 (HFPL…LIIV), and 107-127 (PNDT…LYLA).

The protein belongs to the PsiE family.

It is found in the cell inner membrane. The polypeptide is Protein PsiE homolog (Edwardsiella ictaluri (strain 93-146)).